A 976-amino-acid chain; its full sequence is Apical junction component 1 homolog (976 aa).

Positions 21 to 49 (ATPGPASKCSPCERSVARPAEPAPFNKRH) are disordered. The residue at position 52 (S52) is a Phosphoserine. 3 disordered regions span residues 61-136 (GPAM…EPAY), 220-242 (PQFHGLTVPGPRHMALSRTPTPS), and 264-294 (YAERRSLPFTTPPGPTQFFYTEEPQGFRGSF). Positions 98 to 113 (RAPPGLTPAPASPPVL) are enriched in pro residues. A compositionally biased stretch (basic and acidic residues) spans 116-134 (RGREAQRAARAEASPRREP). At S129 the chain carries Phosphoserine. Omega-N-methylarginine is present on R322. The interval 412–443 (LQVVPPSDPDPLLASWHGGTGTSPPRLATDSR) is disordered. Phosphoserine is present on residues S468, S509, and S512. Disordered stretches follow at residues 539-574 (DLRATERPSARAWELPGGRTRPPPHAAPDGPTSGRQ) and 614-660 (LDSR…ADED). 2 stretches are compositionally biased toward low complexity: residues 616–625 (SRPAGSGAPA) and 633–655 (PASAGSAEEPAAPGEAADASPEP). The residue at position 749 (R749) is an Asymmetric dimethylarginine; alternate. R749 carries the post-translational modification Omega-N-methylarginine; alternate. The disordered stretch occupies residues 855 to 888 (GSPARPPPARSREPDMETLILTPPPGTAGLDQDG).

Its subcellular location is the apical cell membrane. It is found in the cell projection. The protein resides in the cilium. It localises to the cell junction. The protein localises to the adherens junction. In terms of biological role, may be involved in the control of adherens junction integrity. This is Apical junction component 1 homolog from Homo sapiens (Human).